The sequence spans 418 residues: Deubiquitinase and deneddylase Dub1 (418 aa).

A compositionally biased stretch (polar residues) spans 1–10; it reads MLSPTNSISK. The interval 1–23 is disordered; that stretch reads MLSPTNSISKTVPAPPQDSSKPV. Residues 40 to 60 traverse the membrane as a helical segment; the sequence is TALAVLLVVVTLGLILLFYSF. The disordered stretch occupies residues 75-145; it reads STKEHPTISI…LPPKAPKPVK (71 aa). Pro residues predominate over residues 86 to 141; it reads EPLPSPPLAVPRPSTPPPPVISRPSTPPAPTPAISPPSTPSAPKPSTPPPLPPKAP. Active-site residues include His-288, Asp-305, and Cys-358.

Belongs to the peptidase C48 family.

The protein localises to the secreted. It is found in the host cell. Its subcellular location is the membrane. In terms of biological role, effector proteins function to alter host cell physiology and promote bacterial survival in host tissues. This protease possesses deubiquitinating and deneddylating activities. This Chlamydia trachomatis serovar A (strain ATCC VR-571B / DSM 19440 / HAR-13) protein is Deubiquitinase and deneddylase Dub1 (cdu1).